A 207-amino-acid polypeptide reads, in one-letter code: Large ribosomal subunit protein uL4 (207 aa).

This sequence belongs to the universal ribosomal protein uL4 family. In terms of assembly, part of the 50S ribosomal subunit.

One of the primary rRNA binding proteins, this protein initially binds near the 5'-end of the 23S rRNA. It is important during the early stages of 50S assembly. It makes multiple contacts with different domains of the 23S rRNA in the assembled 50S subunit and ribosome. In terms of biological role, forms part of the polypeptide exit tunnel. The sequence is that of Large ribosomal subunit protein uL4 from Erythrobacter litoralis (strain HTCC2594).